We begin with the raw amino-acid sequence, 406 residues long: Tryptophan synthase beta chain (406 aa).

K99 is subject to N6-(pyridoxal phosphate)lysine.

It belongs to the TrpB family. As to quaternary structure, tetramer of two alpha and two beta chains. The cofactor is pyridoxal 5'-phosphate.

The enzyme catalyses (1S,2R)-1-C-(indol-3-yl)glycerol 3-phosphate + L-serine = D-glyceraldehyde 3-phosphate + L-tryptophan + H2O. It participates in amino-acid biosynthesis; L-tryptophan biosynthesis; L-tryptophan from chorismate: step 5/5. In terms of biological role, the beta subunit is responsible for the synthesis of L-tryptophan from indole and L-serine. This chain is Tryptophan synthase beta chain, found in Chelativorans sp. (strain BNC1).